We begin with the raw amino-acid sequence, 245 residues long: uncharacterized protein (245 aa).

The span at 162–174 (KEQSDVTTSERTR) shows a compositional bias: basic and acidic residues. The tract at residues 162 to 183 (KEQSDVTTSERTRSPPGSSKTT) is disordered.

This is an uncharacterized protein from Homo sapiens (Human).